The primary structure comprises 194 residues: ATP-dependent Clp protease proteolytic subunit (194 aa).

Catalysis depends on Ser99, which acts as the Nucleophile. His124 is an active-site residue.

Belongs to the peptidase S14 family. In terms of assembly, fourteen ClpP subunits assemble into 2 heptameric rings which stack back to back to give a disk-like structure with a central cavity, resembling the structure of eukaryotic proteasomes.

It localises to the cytoplasm. The enzyme catalyses Hydrolysis of proteins to small peptides in the presence of ATP and magnesium. alpha-casein is the usual test substrate. In the absence of ATP, only oligopeptides shorter than five residues are hydrolyzed (such as succinyl-Leu-Tyr-|-NHMec, and Leu-Tyr-Leu-|-Tyr-Trp, in which cleavage of the -Tyr-|-Leu- and -Tyr-|-Trp bonds also occurs).. Functionally, cleaves peptides in various proteins in a process that requires ATP hydrolysis. Has a chymotrypsin-like activity. Plays a major role in the degradation of misfolded proteins. The sequence is that of ATP-dependent Clp protease proteolytic subunit from Clostridium perfringens (strain ATCC 13124 / DSM 756 / JCM 1290 / NCIMB 6125 / NCTC 8237 / Type A).